The following is a 291-amino-acid chain: Pantothenate synthetase (291 aa).

30–37 (MGNLHEGH) serves as a coordination point for ATP. H37 functions as the Proton donor in the catalytic mechanism. Position 61 (Q61) interacts with (R)-pantoate. Q61 is a beta-alanine binding site. ATP is bound at residue 149–152 (GEKD). Residue Q155 coordinates (R)-pantoate. Residues V178 and 186–189 (MSSR) each bind ATP.

It belongs to the pantothenate synthetase family. In terms of assembly, homodimer.

Its subcellular location is the cytoplasm. It catalyses the reaction (R)-pantoate + beta-alanine + ATP = (R)-pantothenate + AMP + diphosphate + H(+). Its pathway is cofactor biosynthesis; (R)-pantothenate biosynthesis; (R)-pantothenate from (R)-pantoate and beta-alanine: step 1/1. Functionally, catalyzes the condensation of pantoate with beta-alanine in an ATP-dependent reaction via a pantoyl-adenylate intermediate. This chain is Pantothenate synthetase, found in Aliivibrio fischeri (strain ATCC 700601 / ES114) (Vibrio fischeri).